Consider the following 130-residue polypeptide: Fluoride-specific ion channel FluC (130 aa).

Transmembrane regions (helical) follow at residues 4–24 (MINV…RYFI), 35–55 (GFPI…GLLT), 68–88 (LNLF…TFSL), and 99–119 (AVFG…GVVL). Na(+) contacts are provided by Gly78 and Thr81.

This sequence belongs to the fluoride channel Fluc/FEX (TC 1.A.43) family.

The protein resides in the cell membrane. The enzyme catalyses fluoride(in) = fluoride(out). Its activity is regulated as follows. Na(+) is not transported, but it plays an essential structural role and its presence is essential for fluoride channel function. Fluoride-specific ion channel. Important for reducing fluoride concentration in the cell, thus reducing its toxicity. In Ruminiclostridium cellulolyticum (strain ATCC 35319 / DSM 5812 / JCM 6584 / H10) (Clostridium cellulolyticum), this protein is Fluoride-specific ion channel FluC.